A 215-amino-acid chain; its full sequence is Thiamine-phosphate synthase (215 aa).

4-amino-2-methyl-5-(diphosphooxymethyl)pyrimidine contacts are provided by residues 42–46 (QYREK) and D77. D78 and D97 together coordinate Mg(2+). A 4-amino-2-methyl-5-(diphosphooxymethyl)pyrimidine-binding site is contributed by S116. A 2-[(2R,5Z)-2-carboxy-4-methylthiazol-5(2H)-ylidene]ethyl phosphate-binding site is contributed by 143–145 (TKS). K146 is a 4-amino-2-methyl-5-(diphosphooxymethyl)pyrimidine binding site. 2-[(2R,5Z)-2-carboxy-4-methylthiazol-5(2H)-ylidene]ethyl phosphate contacts are provided by residues G174 and 194-195 (IS).

This sequence belongs to the thiamine-phosphate synthase family. The cofactor is Mg(2+).

It carries out the reaction 2-[(2R,5Z)-2-carboxy-4-methylthiazol-5(2H)-ylidene]ethyl phosphate + 4-amino-2-methyl-5-(diphosphooxymethyl)pyrimidine + 2 H(+) = thiamine phosphate + CO2 + diphosphate. It catalyses the reaction 2-(2-carboxy-4-methylthiazol-5-yl)ethyl phosphate + 4-amino-2-methyl-5-(diphosphooxymethyl)pyrimidine + 2 H(+) = thiamine phosphate + CO2 + diphosphate. The catalysed reaction is 4-methyl-5-(2-phosphooxyethyl)-thiazole + 4-amino-2-methyl-5-(diphosphooxymethyl)pyrimidine + H(+) = thiamine phosphate + diphosphate. Its pathway is cofactor biosynthesis; thiamine diphosphate biosynthesis; thiamine phosphate from 4-amino-2-methyl-5-diphosphomethylpyrimidine and 4-methyl-5-(2-phosphoethyl)-thiazole: step 1/1. In terms of biological role, condenses 4-methyl-5-(beta-hydroxyethyl)thiazole monophosphate (THZ-P) and 2-methyl-4-amino-5-hydroxymethyl pyrimidine pyrophosphate (HMP-PP) to form thiamine monophosphate (TMP). The polypeptide is Thiamine-phosphate synthase (Limosilactobacillus reuteri (strain DSM 20016) (Lactobacillus reuteri)).